Here is a 249-residue protein sequence, read N- to C-terminus: Photosystem I-associated linker protein CpcL (249 aa).

Residues 11–189 (VSQNQRVTNY…PRYGADHREK (179 aa)) form the PBS-linker domain. A helical membrane pass occupies residues 223–247 (VVLYVGGALVSLGIIAVALSAWGII).

Belongs to the phycobilisome linker protein family. As to quaternary structure, part of a specialized phycobilisome (PBS), a structure that is usually composed of two distinct substructures: a core complex and a number of rods radiating from the core. This protein is part of a core-less PBS rod (called CpcL-PBS) with on average 5 stacked phycocyanin hexamers (PC, CpcA and CpcB). Linker CpcL connects the PC stack to the thylakoid, the hexamers are linked by 1 copy of CpcC1, 3 copies of CpcC2 and the stack is terminated by a single copy of CpcD. Ferredoxin--NADP reductase (petH) is also part of the complex. CpcL-PBS has no central core proteins (allophycocyanin ApcA, ApcB) nor phycobiliprotein ApcE.

It localises to the cellular thylakoid membrane. Rod linker protein, associated with phycocyanin. Linker polypeptides determine the state of aggregation and the location of the disk-shaped phycobiliprotein units within the phycobilisome and modulate their spectroscopic properties in order to mediate a directed and optimal energy transfer. Plays a role in energy transfer from the phycobilisome to photosystem I (PSI). Although able to transfer energy to both photosystems, this is predominantly a PSI antenna. This chain is Photosystem I-associated linker protein CpcL, found in Synechocystis sp. (strain ATCC 27184 / PCC 6803 / Kazusa).